The following is a 59-amino-acid chain: Conotoxin Bu1.2 (59 aa).

The signal sequence occupies residues 1-16; it reads MFTVFLLVVLATTVVS. Positions 17–42 are excised as a propeptide; sequence FSTDDESDGSNEEPSADQAARSAMNR. Residues 18-43 form a disordered region; it reads STDDESDGSNEEPSADQAARSAMNRP. The segment covering 19-31 has biased composition (acidic residues); the sequence is TDDESDGSNEEPS. 2 disulfide bridges follow: C46–C52 and C47–C57. Residue G58 is modified to Glycine amide.

Belongs to the conotoxin A superfamily. Expressed by the venom duct.

It localises to the secreted. The sequence is that of Conotoxin Bu1.2 from Conus bullatus (Bubble cone).